We begin with the raw amino-acid sequence, 617 residues long: Neurosecretory protein VGF (617 aa).

Residues 1–23 (MKTFTLPASVLFCFLLLIQGLGA) form the signal peptide. Disordered regions lie at residues 29 to 75 (PDVF…GELF), 93 to 204 (RPAS…ESPG), and 239 to 262 (SESAPLPETHQFGEGVSSPKTHLG). The segment covering 48-64 (AVSRPKDDGVPEVRAAR) has biased composition (basic and acidic residues). Residues 149 to 160 (DPEEDDRSEELE) show a composition bias toward acidic residues. Residues 182-197 (ETAAAETETRTHTLTR) show a composition bias toward low complexity. Gln-313 carries the pyrrolidone carboxylic acid modification. Over residues 345-364 (RQRDLGGRELQETQQERENE) the composition is skewed to basic and acidic residues. The tract at residues 345 to 599 (RQRDLGGREL…EEADAEERRL (255 aa)) is disordered. Acidic residues predominate over residues 378–397 (EDDVGEEDEEAAEAEAEAEE). A compositionally biased stretch (basic and acidic residues) spans 418–436 (AEDKRSQEEAPGHRRKDAE). A Phosphoserine modification is found at Ser-423. Acidic residues predominate over residues 437–452 (GAEEGGEEDDDDEEMD). Residues 491 to 501 (PPEPVPPPRAA) are compositionally biased toward pro residues. Positions 577–599 (HHPDLEAQARRAQEEADAEERRL) are enriched in basic and acidic residues.

In terms of assembly, interacts with HSPA8 on cell membrane. Interacts with C3AR1. Interacts with C1QBP.

Its subcellular location is the secreted. It localises to the cytoplasmic vesicle. The protein resides in the secretory vesicle. Secreted polyprotein that is packaged and proteolytically processed by prohormone convertases PCSK1 and PCSK2 in a cell-type-specific manner. VGF and peptides derived from its processing play many roles in neurogenesis and neuroplasticity associated with learning, memory, depression and chronic pain. Its function is as follows. Plays a role in the control of body fluid homeostasis by regulating vasopressin release. Suppresses presynaptic glutamatergic neurons connected to vasopressin neurons. In terms of biological role, plays a role in the control of body fluid homeostasis by regulating vasopressin release. Activates GABAergic interneurons which are inhibitory neurons of the nervous system and thereby suppresses presynaptic glutamatergic neurons. Also stimulates feeding behavior in an orexin-dependent manner in the hypothalamus. Functions as a positive regulator for the activation of orexin neurons resulting in elevated gastric acid secretion and gastric emptying. Functionally, secreted multifunctional peptide that interacts with different receptors and thereby plays multiple physiological roles including modulation of energy expenditure, pain, response to stress, gastric regulation as well as lipolysis. Activates the G-protein-coupled receptor C3AR1 via a folding-upon-binding mechanism leading to enhanced lipolysis in adipocytes. Interacts with gC1qR receptor in macrophages and microglia causing increased levels of intracellular calcium and hypersensitivity. Plays a role in the regulation of memory formation and depression-related behaviors potentially by influencing synaptic plasticity and neurogenesis. Induces acute and transient activation of the NTRK2/TRKB receptor and subsequent CREB phosphorylation. Also induces insulin secretion in insulinoma cells by increasing intracellular calcium mobilization. This chain is Neurosecretory protein VGF, found in Mus musculus (Mouse).